Here is a 188-residue protein sequence, read N- to C-terminus: Peptidyl-tRNA hydrolase (188 aa).

Tyr14 is a tRNA binding site. His19 serves as the catalytic Proton acceptor. Positions 64, 66, and 112 each coordinate tRNA.

This sequence belongs to the PTH family. As to quaternary structure, monomer.

The protein localises to the cytoplasm. It catalyses the reaction an N-acyl-L-alpha-aminoacyl-tRNA + H2O = an N-acyl-L-amino acid + a tRNA + H(+). Functionally, hydrolyzes ribosome-free peptidyl-tRNAs (with 1 or more amino acids incorporated), which drop off the ribosome during protein synthesis, or as a result of ribosome stalling. Its function is as follows. Catalyzes the release of premature peptidyl moieties from peptidyl-tRNA molecules trapped in stalled 50S ribosomal subunits, and thus maintains levels of free tRNAs and 50S ribosomes. The polypeptide is Peptidyl-tRNA hydrolase (Bacillus licheniformis (strain ATCC 14580 / DSM 13 / JCM 2505 / CCUG 7422 / NBRC 12200 / NCIMB 9375 / NCTC 10341 / NRRL NRS-1264 / Gibson 46)).